A 445-amino-acid chain; its full sequence is Phosphoglucosamine mutase (445 aa).

Residue Ser-102 is the Phosphoserine intermediate of the active site. Ser-102, Asp-241, Asp-243, and Asp-245 together coordinate Mg(2+). At Ser-102 the chain carries Phosphoserine.

This sequence belongs to the phosphohexose mutase family. Mg(2+) serves as cofactor. In terms of processing, activated by phosphorylation.

The catalysed reaction is alpha-D-glucosamine 1-phosphate = D-glucosamine 6-phosphate. In terms of biological role, catalyzes the conversion of glucosamine-6-phosphate to glucosamine-1-phosphate. The protein is Phosphoglucosamine mutase of Haemophilus influenzae (strain PittEE).